Consider the following 432-residue polypeptide: MCACMTKEALLEVCKQNGLYRTASLNDKLYCNFKGFSQIACLEDYVNLKALFLEGNVLETLEGLPPLADLKCLYVQQNCIWKISGLEAVPGLDTLNISNNQLTKLEGLACCPALRTLIATHNHLVTLDSVAHLAECKALQTLDLQNNELEDPGIVDILKQIPDLRCLYLKGNPVVSNIKNYRKVLVTSIPSLTYLDDRPVFDNERKIAQAWLEGGLEGERAMRNQLKEEEEERSRKNHEFMMQMRAAGWRERRKRMGLPDGDTDPALDDMSDGEYEFDEEPEELVEARQRLAAYTARPGEEEPAELASARQGLARDGKPIQEGAWGSGAAAESDSAIYLQSVKAAQAELDVVRQQQPRQLPTAQVLIEELDEPCGGKAPAADEGSTPPALSPMTSPSGSEGQGGEGVAAAKKGAASGAAEGISAAVDINDLD.

5 LRR repeats span residues 47–68, 69–90, 91–112, 113–134, and 138–159; these read NLKALFLEGNVLETLEGLPPLA, DLKCLYVQQNCIWKISGLEAVP, GLDTLNISNNQLTKLEGLACCP, ALRTLIATHNHLVTLDSVAHLA, and ALQTLDLQNNELEDPGIVDILK. The region spanning 173-211 is the LRRCT domain; sequence PVVSNIKNYRKVLVTSIPSLTYLDDRPVFDNERKIAQAW. Residues 212–243 adopt a coiled-coil conformation; the sequence is LEGGLEGERAMRNQLKEEEEERSRKNHEFMMQ. Disordered stretches follow at residues 297–332 and 368–432; these read RPGEEEPAELASARQGLARDGKPIQEGAWGSGAAAE and EELD…NDLD. Low complexity-rich tracts occupy residues 323-332 and 407-425; these read GAWGSGAAAE and VAAAKKGAASGAAEGISAA.

It belongs to the DNAAF1 family. Interacts with both outer row and I1 inner row dyneins.

The protein resides in the cytoplasm. The protein localises to the cytoskeleton. It is found in the cilium axoneme. Functionally, cilium-specific protein required for cilia structures. Axonemal dynein-associated protein that participates in a structural link between inner and outer row dyneins. The protein is Leucine-rich repeat-containing protein ODA7 (ODA7) of Chlamydomonas reinhardtii (Chlamydomonas smithii).